The chain runs to 354 residues: MRSLLFLVLISVCRADHLSDSYTPDQDRVIHIQAENGPRLLVEAEQAKVFSHRGGNVTLPCKFYRDPTAFGSGIHKIRIKWTKLTSDYLREVDVFVSMGYHKKTYGGYQGRVFLKGGSDNDASLIITDLTLEDYGRYKCEVIEGLEDDTAVVALELQGVVFPYFPRLGRYNLNFHEARQACLDQDAVIASFDQLYDAWRGGLDWCNAGWLSDGSVQYPITKPREPCGGQNTVPGVRNYGFWDKDKSRYDVFCFTSNFNGRFYYLIHPTKLTYDEAVQACLNDGAQIAKVGQIFAAWKLLGYDRCDAGWLADGSVRYPISRPRRRCSPTEAAVRFVGFPDKKHKLYGVYCFRAYN.

Residues 1–9 (MRSLLFLVL) constitute a propeptide that is removed on maturation. The region spanning 38–152 (PRLLVEAEQA…EGLEDDTAVV (115 aa)) is the Ig-like V-type domain. N-linked (GlcNAc...) asparagine glycosylation occurs at asparagine 56. 5 disulfide bridges follow: cysteine 61/cysteine 139, cysteine 181/cysteine 252, cysteine 205/cysteine 226, cysteine 279/cysteine 349, and cysteine 304/cysteine 325. 2 Link domains span residues 159-254 (VVFP…FCFT) and 259-351 (GRFY…YCFR).

The protein belongs to the HAPLN family.

It localises to the secreted. It is found in the extracellular space. Its subcellular location is the extracellular matrix. In terms of biological role, stabilizes the aggregates of proteoglycan monomers with hyaluronic acid in the extracellular cartilage matrix. The protein is Hyaluronan and proteoglycan link protein 1 (Hapln1) of Rattus norvegicus (Rat).